A 308-amino-acid chain; its full sequence is Glutaminase (308 aa).

Substrate is bound by residues Ser-66, Asn-117, Glu-161, Asn-168, Tyr-192, Tyr-244, and Val-262.

This sequence belongs to the glutaminase family. Homotetramer.

It carries out the reaction L-glutamine + H2O = L-glutamate + NH4(+). The polypeptide is Glutaminase (Shigella dysenteriae serotype 1 (strain Sd197)).